Consider the following 600-residue polypeptide: Netrin-1 (600 aa).

The first 24 residues, 1–24, serve as a signal peptide directing secretion; it reads MMRAMWEALAALAAVSCLVGAVRG. The 238-residue stretch at 47–284 folds into the Laminin N-terminal domain; that stretch reads HPRRCIPDFV…AVSDLQVGGR (238 aa). N-linked (GlcNAc...) asparagine glycosylation is found at asparagine 95, asparagine 116, and asparagine 131. 14 disulfide bridges follow: cysteine 119/cysteine 152, cysteine 285/cysteine 294, cysteine 287/cysteine 304, cysteine 306/cysteine 315, cysteine 318/cysteine 338, cysteine 341/cysteine 350, cysteine 343/cysteine 368, cysteine 371/cysteine 380, cysteine 383/cysteine 401, cysteine 404/cysteine 416, cysteine 406/cysteine 423, cysteine 425/cysteine 434, cysteine 437/cysteine 451, and cysteine 472/cysteine 544. 3 consecutive Laminin EGF-like domains span residues 285–340, 341–403, and 404–453; these read CKCN…ECVA, CNCN…ACKA, and CDCH…PCIK. N-linked (GlcNAc...) asparagine glycosylation is present at asparagine 417. Positions 472-600 constitute an NTR domain; the sequence is CDSYCKASKG…KFQQREKKEL (129 aa). The Cell attachment site signature appears at 530-532; sequence RGD.

As to quaternary structure, binds to its receptors; DCC, UNC5A, UNC5B, UNC5C and probably UNC5D. Binds to its receptor; DSCAM. Interacts with APP.

It is found in the secreted. Its subcellular location is the cytoplasm. In terms of biological role, netrins control guidance of CNS commissural axons and peripheral motor axons. Its association with either DCC or some UNC5 receptors will lead to axon attraction or repulsion, respectively. Binding to UNC5C might cause dissociation of UNC5C from polymerized TUBB3 in microtubules and thereby lead to increased microtubule dynamics and axon repulsion. Involved in dorsal root ganglion axon projection towards the spinal cord. It also serves as a survival factor via its association with its receptors which prevent the initiation of apoptosis. Involved in colorectal tumorigenesis by regulating apoptosis. This is Netrin-1 (NTN1) from Sus scrofa (Pig).